The chain runs to 164 residues: Kunitz-type serine protease inhibitor BbKI (164 aa).

It belongs to the protease inhibitor I3 (leguminous Kunitz-type inhibitor) family. In terms of assembly, monomer.

Its subcellular location is the secreted. In terms of biological role, inhibits bovine trypsin, human plasma kallikrein and plasmin and weakly bovine chymotrypsin. This chain is Kunitz-type serine protease inhibitor BbKI, found in Bauhinia bauhinioides (Perlebia bauhinoides).